The primary structure comprises 426 residues: MASIVVVGLQWGDEGKGKIVDWLSVSADAVVRFQGGNNAGHTVVADGRVYKLSLLPTSVLRQNKLSMIGSGVALDPYALVREVDSLKDSGIFLDPDSLCLSESCPLVLSVHRDADSIMEEMRGNESIGTTCMGIGPCYEDKVGRRAIRLCDLLDETSLYDKVLCLLSYHNLLRRATNRREVTPHEIMDELTQIAPKVLPFMKPVPEIIVSLIKQGKTVLFEGAQGALLDIDHGTYPYVTSSNTVAGYVRVGCGVGALGDMRVLGLAKAYTTRVGNGPFATEQTGTVGDAMFERGREVGTVTNRVRRCGWFDAVSVRQAALSSGASEMVITKLDVLDTIDEIKVCTKYRCGEESYDYLPAASHIQNRLEPVYETLPGWRTSTLGAVSRSDLPENAVSYISRLEELVGVPVSLVSTGPERNHIVPMNP.

GTP is bound by residues 12–18 (GDEGKGK) and 40–42 (GHT). The Proton acceptor role is filled by D13. 2 residues coordinate Mg(2+): D13 and G40. Residues 13–16 (DEGK), 38–41 (NAGH), T130, R144, Q224, T239, and R303 each bind IMP. H41 acts as the Proton donor in catalysis. 299-305 (TVTNRVR) provides a ligand contact to substrate. GTP-binding positions include R305, 331-333 (KLD), and 413-415 (STG).

This sequence belongs to the adenylosuccinate synthetase family. Homodimer. The cofactor is Mg(2+).

Its subcellular location is the cytoplasm. The catalysed reaction is IMP + L-aspartate + GTP = N(6)-(1,2-dicarboxyethyl)-AMP + GDP + phosphate + 2 H(+). Its pathway is purine metabolism; AMP biosynthesis via de novo pathway; AMP from IMP: step 1/2. Functionally, plays an important role in the de novo pathway of purine nucleotide biosynthesis. Catalyzes the first committed step in the biosynthesis of AMP from IMP. This is Adenylosuccinate synthetase from Anaplasma marginale (strain St. Maries).